A 124-amino-acid chain; its full sequence is Seripauperin-3 (124 aa).

The chain crosses the membrane as a helical span at residues 7 to 24 (IAAGVAAIAAGIAAAPAT).

This sequence belongs to the SRP1/TIP1 family. Seripauperin subfamily.

The protein localises to the membrane. The protein is Seripauperin-3 (PAU3) of Saccharomyces cerevisiae (strain ATCC 204508 / S288c) (Baker's yeast).